Here is a 290-residue protein sequence, read N- to C-terminus: ATP synthase gamma chain (290 aa).

This sequence belongs to the ATPase gamma chain family. F-type ATPases have 2 components, CF(1) - the catalytic core - and CF(0) - the membrane proton channel. CF(1) has five subunits: alpha(3), beta(3), gamma(1), delta(1), epsilon(1). CF(0) has three main subunits: a, b and c.

It is found in the cell membrane. In terms of biological role, produces ATP from ADP in the presence of a proton gradient across the membrane. The gamma chain is believed to be important in regulating ATPase activity and the flow of protons through the CF(0) complex. The chain is ATP synthase gamma chain from Wolbachia sp. subsp. Brugia malayi (strain TRS).